The sequence spans 331 residues: Ribosomal RNA small subunit methyltransferase H (331 aa).

S-adenosyl-L-methionine-binding positions include 56–58 (GGH), Asp76, Phe100, Asp122, and Gln129.

The protein belongs to the methyltransferase superfamily. RsmH family.

The protein localises to the cytoplasm. The enzyme catalyses cytidine(1402) in 16S rRNA + S-adenosyl-L-methionine = N(4)-methylcytidine(1402) in 16S rRNA + S-adenosyl-L-homocysteine + H(+). Its function is as follows. Specifically methylates the N4 position of cytidine in position 1402 (C1402) of 16S rRNA. The polypeptide is Ribosomal RNA small subunit methyltransferase H (Chromohalobacter salexigens (strain ATCC BAA-138 / DSM 3043 / CIP 106854 / NCIMB 13768 / 1H11)).